We begin with the raw amino-acid sequence, 194 residues long: uncharacterized protein (194 aa).

This is an uncharacterized protein from Escherichia coli (strain K12).